Here is a 529-residue protein sequence, read N- to C-terminus: MATTSFSLPNHKFGIKLMLFLVLNLLSLQTSVFAHSSNSKFTKISRHPNSDSSSRTKPSTSSNKGFLSSVQLSLDHALFARSLAFNLTLSHRTSQTLMLDPVNDCLELLDDTLDMLYRIVVIKRKDHVNDDVHTWLSAALTNQETCKQSLSEKSSFNKEGIAIDSFARNLTGLLTNSLDMFVSDKQKSSSSSNLTGGRKLLSDHDFPTWVSSSDRKLLEASVEELRPHAVVAADGSGTHMSVAEALASLEKGSGRSVIHLTAGTYKENLNIPSKQKNVMLVGDGKGKTVIVGSRSNRGGWNTYQSATVAAMGDGFIARDITFVNSAGPNSEQAVALRVGSDRSVVYRCSIDGYQDSLYTLSKRQFYRETDITGTVDFIFGNSAVVFQSCNLVSRKGSSDQNYVTAQGRSDPNQNTGISIHNCRITGSTKTYLGRPWKQYSRTVVMQSFIDGSIHPSGWSPWSSNFALKTLYYGEFGNSGPGSSVSGRVSWAGYHPALTLTEAQGFTVSGFIDGNSWLPSTGVVFDSGLL.

The first 34 residues, 1-34 (MATTSFSLPNHKFGIKLMLFLVLNLLSLQTSVFA), serve as a signal peptide directing secretion. A pectinesterase inhibitor 35 region spans residues 36 to 180 (SSNSKFTKIS…TGLLTNSLDM (145 aa)). The disordered stretch occupies residues 42–64 (TKISRHPNSDSSSRTKPSTSSNK). A compositionally biased stretch (low complexity) spans 50-64 (SDSSSRTKPSTSSNK). N-linked (GlcNAc...) asparagine glycans are attached at residues Asn-86, Asn-169, and Asn-193. A pectinesterase 35 region spans residues 228-514 (HAVVAADGSG…FTVSGFIDGN (287 aa)). Substrate-binding residues include Thr-302 and Gln-332. The Proton donor; for pectinesterase activity role is filled by Asp-355. The active-site Nucleophile; for pectinesterase activity is Asp-376. Substrate contacts are provided by Arg-434 and Trp-436.

This sequence in the N-terminal section; belongs to the PMEI family. It in the C-terminal section; belongs to the pectinesterase family. Expressed in siliques.

The protein localises to the secreted. It localises to the cell wall. The catalysed reaction is [(1-&gt;4)-alpha-D-galacturonosyl methyl ester](n) + n H2O = [(1-&gt;4)-alpha-D-galacturonosyl](n) + n methanol + n H(+). The protein operates within glycan metabolism; pectin degradation; 2-dehydro-3-deoxy-D-gluconate from pectin: step 1/5. Functionally, acts in the modification of cell walls via demethylesterification of cell wall pectin. In Arabidopsis thaliana (Mouse-ear cress), this protein is Probable pectinesterase/pectinesterase inhibitor 35 (PME35).